Reading from the N-terminus, the 406-residue chain is WD repeat and SOCS box-containing protein 2 (406 aa).

A disordered region spans residues 70–89 (AKSRSSKNETKGRGSPKEKT). WD repeat units follow at residues 107-150 (PPSK…LLLN), 153-193 (GHQD…KQIQ), 197-236 (GHLQ…LIRK), 239-278 (GHQS…RLRS), and 293-332 (VHIS…PIAF). One can recognise an SOCS box domain in the interval 358–406 (HVQFWTAPRVLSSLKHLCRKALRSFLTTYQVLALPIPKKMKEFLTYRTF).

The protein operates within protein modification; protein ubiquitination. In terms of biological role, may be a substrate-recognition component of a SCF-like ECS (Elongin-Cullin-SOCS-box protein) E3 ubiquitin ligase complex which mediates the ubiquitination and subsequent proteasomal degradation of target proteins. This Bos taurus (Bovine) protein is WD repeat and SOCS box-containing protein 2 (WSB2).